Reading from the N-terminus, the 90-residue chain is Probable Fe(2+)-trafficking protein (90 aa).

Belongs to the Fe(2+)-trafficking protein family.

In terms of biological role, could be a mediator in iron transactions between iron acquisition and iron-requiring processes, such as synthesis and/or repair of Fe-S clusters in biosynthetic enzymes. The sequence is that of Probable Fe(2+)-trafficking protein from Pseudomonas putida (strain W619).